Reading from the N-terminus, the 331-residue chain is 6-phosphogluconolactonase (331 aa).

The protein belongs to the cycloisomerase 2 family.

The catalysed reaction is 6-phospho-D-glucono-1,5-lactone + H2O = 6-phospho-D-gluconate + H(+). It functions in the pathway carbohydrate degradation; pentose phosphate pathway; D-ribulose 5-phosphate from D-glucose 6-phosphate (oxidative stage): step 2/3. Catalyzes the hydrolysis of 6-phosphogluconolactone to 6-phosphogluconate. This chain is 6-phosphogluconolactonase, found in Sodalis glossinidius (strain morsitans).